Reading from the N-terminus, the 236-residue chain is (5-formylfuran-3-yl)methyl phosphate synthase (236 aa).

The Schiff-base intermediate with substrate role is filled by Lys27. Catalysis depends on Lys85, which acts as the Proton acceptor.

The protein belongs to the MfnB family.

The enzyme catalyses 2 D-glyceraldehyde 3-phosphate = 4-(hydroxymethyl)-2-furancarboxaldehyde phosphate + phosphate + 2 H2O. It functions in the pathway cofactor biosynthesis; methanofuran biosynthesis. Its function is as follows. Catalyzes the formation of 4-(hydroxymethyl)-2-furancarboxaldehyde phosphate (4-HFC-P) from two molecules of glyceraldehyde-3-P (GA-3-P). This Methanothermobacter thermautotrophicus (strain ATCC 29096 / DSM 1053 / JCM 10044 / NBRC 100330 / Delta H) (Methanobacterium thermoautotrophicum) protein is (5-formylfuran-3-yl)methyl phosphate synthase.